A 174-amino-acid chain; its full sequence is Nucleoside diphosphate kinase (174 aa).

K14, F62, R90, T96, and R107 together coordinate ATP. Residue H123 is the Pros-phosphohistidine intermediate of the active site.

The protein belongs to the NDK family. Requires Mg(2+) as cofactor.

It localises to the cytoplasm. It catalyses the reaction a 2'-deoxyribonucleoside 5'-diphosphate + ATP = a 2'-deoxyribonucleoside 5'-triphosphate + ADP. The enzyme catalyses a ribonucleoside 5'-diphosphate + ATP = a ribonucleoside 5'-triphosphate + ADP. Its function is as follows. Major role in the synthesis of nucleoside triphosphates other than ATP. The ATP gamma phosphate is transferred to the NDP beta phosphate via a ping-pong mechanism, using a phosphorylated active-site intermediate. This chain is Nucleoside diphosphate kinase, found in Thermococcus kodakarensis (strain ATCC BAA-918 / JCM 12380 / KOD1) (Pyrococcus kodakaraensis (strain KOD1)).